Reading from the N-terminus, the 402-residue chain is Apolipoprotein L3 (402 aa).

This sequence belongs to the apolipoprotein L family. Widely expressed; the highest levels are in prostate, lung and placenta; also detected in kidney, bone marrow, spleen, thymus, spinal cord, adrenal gland, salivary gland, trachea and mammary gland; levels are low in brain, heart, fetal liver, pancreas and testis.

It localises to the cytoplasm. Its function is as follows. May affect the movement of lipids in the cytoplasm or allow the binding of lipids to organelles. This is Apolipoprotein L3 (APOL3) from Homo sapiens (Human).